Here is a 203-residue protein sequence, read N- to C-terminus: Large ribosomal subunit protein bL25 (203 aa).

This sequence belongs to the bacterial ribosomal protein bL25 family. CTC subfamily. In terms of assembly, part of the 50S ribosomal subunit; part of the 5S rRNA/L5/L18/L25 subcomplex. Contacts the 5S rRNA. Binds to the 5S rRNA independently of L5 and L18.

Its function is as follows. This is one of the proteins that binds to the 5S RNA in the ribosome where it forms part of the central protuberance. The polypeptide is Large ribosomal subunit protein bL25 (Cereibacter sphaeroides (strain ATCC 17025 / ATH 2.4.3) (Rhodobacter sphaeroides)).